Here is a 449-residue protein sequence, read N- to C-terminus: MYLVVVGVNHRTAPVEVREKLSFSDHQLKDAFSALLSYPSIDGSVILSTCNRTEVYVASLDVDTGLKVVREFLANWAGLSLSDIKNYTYNYTLYDAVHHLFRVASGLDSMILGETQILGQVRDAFLKASSLKASNKILNTLFQHAITVGKKVRTETGIDKNPVSISYAAVQLACSFFGSLKDKKALLIGAGKMSSLTAKHLSYYGIKEIIVANRSFEKAEQFAREFNGIAVPFAKIYDILAEVDLVISCTGAPHLIIHKEQLELVIGNRQHPLYLIDIAVPRDIDPEIAKLPNVFLYDIDKLQNVVTKNLEERKKLAEMAENIIETELKAFIEWHSTQFVVPTIVALKKKAEEIKQKELTKALNKLGNISEREKNIVCALAHTILNQLLHTPIVKLKQYALTPQGHLYTEILQNLFDLQVEGERPKNFTHPREEMEESDEKRSYCGESR.

Substrate contacts are provided by residues 49 to 52 (TCNR), Ser109, 114 to 116 (ETQ), and Gln120. Cys50 (nucleophile) is an active-site residue. 189–194 (GAGKMS) is a binding site for NADP(+). A disordered region spans residues 427–449 (NFTHPREEMEESDEKRSYCGESR).

Belongs to the glutamyl-tRNA reductase family. As to quaternary structure, homodimer.

The catalysed reaction is (S)-4-amino-5-oxopentanoate + tRNA(Glu) + NADP(+) = L-glutamyl-tRNA(Glu) + NADPH + H(+). It participates in porphyrin-containing compound metabolism; protoporphyrin-IX biosynthesis; 5-aminolevulinate from L-glutamyl-tRNA(Glu): step 1/2. Catalyzes the NADPH-dependent reduction of glutamyl-tRNA(Glu) to glutamate 1-semialdehyde (GSA). The chain is Glutamyl-tRNA reductase from Carboxydothermus hydrogenoformans (strain ATCC BAA-161 / DSM 6008 / Z-2901).